A 143-amino-acid chain; its full sequence is MLMGQYEHTIDSKGRVIIPAKFREELGEKFVLTKGLDNCLFVYSLDEWKNIEEKLKTLPLTKKDARAFTRFFLAGAVECEVDKQGRILIPSHLREHAKIEKDVIFIGVSTRVEIWSKEVWEEYSKSTDVSFEEIAEHLDNFNI.

SpoVT-AbrB domains lie at Q5–E47 and A76–V119.

Belongs to the MraZ family. As to quaternary structure, forms oligomers.

It localises to the cytoplasm. Its subcellular location is the nucleoid. The chain is Transcriptional regulator MraZ from Caldanaerobacter subterraneus subsp. tengcongensis (strain DSM 15242 / JCM 11007 / NBRC 100824 / MB4) (Thermoanaerobacter tengcongensis).